Here is a 284-residue protein sequence, read N- to C-terminus: Nucleotide-binding protein NGK_0463 (284 aa).

An ATP-binding site is contributed by 8 to 15 (GLSGSGKS). 58–61 (DVRS) lines the GTP pocket.

This sequence belongs to the RapZ-like family.

Functionally, displays ATPase and GTPase activities. This chain is Nucleotide-binding protein NGK_0463, found in Neisseria gonorrhoeae (strain NCCP11945).